The sequence spans 72 residues: Gas vesicle protein A (72 aa).

The protein belongs to the gas vesicle GvpA family. As to quaternary structure, the gas vesicle shell is 2 nm thick and consists of a single layer of this protein. It forms helical ribs nearly perpendicular to the long axis of the vesicle.

It localises to the gas vesicle shell. In terms of biological role, gas vesicles are hollow, gas filled proteinaceous nanostructures found in some microorganisms. During planktonic growth they allow positioning of the organism at a favorable depth for light or nutrient acquisition. GvpA forms the protein shell. The protein is Gas vesicle protein A of Geotalea uraniireducens (strain Rf4) (Geobacter uraniireducens).